The primary structure comprises 1249 residues: Hyphally regulated cell wall protein 3 (1249 aa).

An N-terminal signal peptide occupies residues 1-20 (MHLFKRIALTLWLIISSTLA). An N-linked (GlcNAc...) asparagine glycan is attached at asparagine 373. Low complexity predominate over residues 383–415 (FPTTSQSSSSETVASSSQPDSSSTEPSAFPSST). 2 disordered regions span residues 383-729 (FPTT…SGII) and 883-1217 (GLST…SSAS). The span at 416-428 (GDSSAEPSITSDY) shows a compositional bias: polar residues. Residues 429 to 716 (SSSELSVVPS…SEYTATWTTT (288 aa)) show a composition bias toward low complexity. Asparagine 681 is a glycosylation site (N-linked (GlcNAc...) asparagine). Polar residues-rich tracts occupy residues 717–729 (NSDG…SGII) and 883–935 (GLST…PVPT). Residues asparagine 891, asparagine 940, asparagine 944, asparagine 948, asparagine 952, asparagine 956, asparagine 960, asparagine 966, asparagine 970, asparagine 974, asparagine 984, asparagine 988, asparagine 992, asparagine 996, asparagine 1000, asparagine 1010, asparagine 1014, asparagine 1018, asparagine 1022, asparagine 1026, asparagine 1032, asparagine 1046, asparagine 1050, asparagine 1058, asparagine 1062, asparagine 1072, asparagine 1076, asparagine 1080, asparagine 1086, asparagine 1090, asparagine 1094, asparagine 1098, asparagine 1114, asparagine 1118, asparagine 1122, asparagine 1128, asparagine 1132, asparagine 1136, asparagine 1140, asparagine 1150, asparagine 1154, asparagine 1158, asparagine 1172, asparagine 1180, and asparagine 1186 are each glycosylated (N-linked (GlcNAc...) asparagine). The segment covering 941–959 (GSNNGSDNGSNNGSNNGSN) has biased composition (low complexity). The segment covering 960–982 (NGSGSGNGSNNGSNNGSGSGNGF) has biased composition (gly residues). Residues 983–1043 (NNGSDNGSNN…SNSGSDSGNG (61 aa)) show a composition bias toward low complexity. The span at 1062–1078 (NGSGSGGESNNGSGNGS) shows a compositional bias: gly residues. Residues 1079–1097 (DNGSSPDNGSNNGSNNGSN) show a composition bias toward low complexity. A compositionally biased stretch (low complexity) spans 1139 to 1167 (NNGSNSGSNSDNGSNNSSGNGSSSDLGSV). Composition is skewed to low complexity over residues 1175–1194 (NEGS…GAGA) and 1205–1217 (SPSA…SSAS). Residue asparagine 1225 is glycosylated (N-linked (GlcNAc...) asparagine). Asparagine 1225 is lipidated: GPI-anchor amidated asparagine. A propeptide spans 1226 to 1249 (GSGKLLNGKVLTLSVLSSMVVVFL) (removed in mature form).

This sequence belongs to the HYR1/IFF family. Post-translationally, the GPI-anchor is attached to the protein in the endoplasmic reticulum and serves to target the protein to the cell surface. There, the glucosamine-inositol phospholipid moiety is cleaved off and the GPI-modified mannoprotein is covalently attached via its lipidless GPI glycan remnant to the 1,6-beta-glucan of the outer cell wall layer.

The protein resides in the secreted. It localises to the cell wall. The protein localises to the membrane. Its function is as follows. GPI-anchored cell wall protein involved in cell wall organization, hyphal growth, as well as in host-fungal interaction and virulence. The sequence is that of Hyphally regulated cell wall protein 3 (HYR3) from Candida albicans (strain SC5314 / ATCC MYA-2876) (Yeast).